The following is a 252-amino-acid chain: Trans-aconitate 2-methyltransferase (252 aa).

Belongs to the methyltransferase superfamily. Tam family.

It is found in the cytoplasm. The enzyme catalyses trans-aconitate + S-adenosyl-L-methionine = (E)-3-(methoxycarbonyl)pent-2-enedioate + S-adenosyl-L-homocysteine. Functionally, catalyzes the S-adenosylmethionine monomethyl esterification of trans-aconitate. This is Trans-aconitate 2-methyltransferase from Escherichia fergusonii (strain ATCC 35469 / DSM 13698 / CCUG 18766 / IAM 14443 / JCM 21226 / LMG 7866 / NBRC 102419 / NCTC 12128 / CDC 0568-73).